The sequence spans 251 residues: CDP-diacylglycerol pyrophosphatase (251 aa).

The chain crosses the membrane as a helical span at residues 4 to 24 (AGLLFLVMIVIAVVAAGIGYW).

This sequence belongs to the Cdh family.

The protein localises to the cell inner membrane. The enzyme catalyses a CDP-1,2-diacyl-sn-glycerol + H2O = a 1,2-diacyl-sn-glycero-3-phosphate + CMP + 2 H(+). Its pathway is phospholipid metabolism; CDP-diacylglycerol degradation; phosphatidate from CDP-diacylglycerol: step 1/1. The sequence is that of CDP-diacylglycerol pyrophosphatase from Escherichia coli (strain K12 / MC4100 / BW2952).